The chain runs to 421 residues: Ribulose bisphosphate carboxylase large chain (421 aa).

Residues asparagine 68 and threonine 118 each coordinate substrate. Lysine 120 (proton acceptor) is an active-site residue. Lysine 122 contributes to the substrate binding site. Mg(2+) is bound by residues lysine 146, aspartate 148, and glutamate 149. Lysine 146 bears the N6-carboxylysine mark. The active-site Proton acceptor is the histidine 239. Arginine 240, histidine 272, and serine 324 together coordinate substrate.

It belongs to the RuBisCO large chain family. Type I subfamily. Heterohexadecamer of 8 large chains and 8 small chains; disulfide-linked. The disulfide link is formed within the large subunit homodimers. Requires Mg(2+) as cofactor. The disulfide bond which can form in the large chain dimeric partners within the hexadecamer appears to be associated with oxidative stress and protein turnover.

The protein localises to the plastid. Its subcellular location is the chloroplast. It catalyses the reaction 2 (2R)-3-phosphoglycerate + 2 H(+) = D-ribulose 1,5-bisphosphate + CO2 + H2O. It carries out the reaction D-ribulose 1,5-bisphosphate + O2 = 2-phosphoglycolate + (2R)-3-phosphoglycerate + 2 H(+). In terms of biological role, ruBisCO catalyzes two reactions: the carboxylation of D-ribulose 1,5-bisphosphate, the primary event in carbon dioxide fixation, as well as the oxidative fragmentation of the pentose substrate in the photorespiration process. Both reactions occur simultaneously and in competition at the same active site. The protein is Ribulose bisphosphate carboxylase large chain (rbcL) of Aegilops crassa (Persian goatgrass).